The chain runs to 338 residues: Popeye domain-containing protein 1-A (338 aa).

At 1-40 (MTTESIFITTLPMDFNSQFDNITIGLNDNETLCENWREIH) the chain is on the extracellular side. Residues Asn-21 and Asn-29 are each glycosylated (N-linked (GlcNAc...) asparagine). The chain crosses the membrane as a helical span at residues 41–61 (HLVFHLANTCFAAGLVIPSTL). Residues 62–65 (NLHM) lie on the Cytoplasmic side of the membrane. Residues 66 to 86 (LFLRGMLCLGCTFFIIWAVLF) form a helical membrane-spanning segment. The Extracellular segment spans residues 87 to 91 (RCALD). The chain crosses the membrane as a helical span at residues 92 to 112 (IMIWNATFLSINFMHFVYLVY). Residues 113–338 (KKRPIKIKKE…VGPLSHAVFC (226 aa)) are Cytoplasmic-facing. Positions 296–317 (TNDNEDGLQNFLRGTSTTSSQR) are disordered. The span at 307-317 (LRGTSTTSSQR) shows a compositional bias: polar residues.

It belongs to the popeye family. In terms of tissue distribution, expressed in the heart.

Its subcellular location is the lateral cell membrane. The protein resides in the cell junction. It localises to the tight junction. It is found in the membrane. In terms of biological role, cell adhesion molecule involved in the establishment and/or maintenance of cell integrity. Plays a role in vamp3-mediated vesicular transport and recycling of different receptor molecules. May be involved in the formation and regulation of the tight junction (TJ) paracellular permeability barrier in epithelial cells. May induce primordial adhesive contact and aggregation of epithelial cells in a Ca(2+)-independent manner. May be involved in epithelial movement during corneal sheet formation and regeneration. May play a role in the regulation of cell shape and movement by modulating the Rho-GTPase activity. May also be involved in striated muscle regeneration and in the regulation of cell spreading. This chain is Popeye domain-containing protein 1-A (popdc1-a), found in Xenopus laevis (African clawed frog).